Here is a 483-residue protein sequence, read N- to C-terminus: FAD-linked oxidoreductase easE (483 aa).

The region spanning 10–193 (QGRLPLYSAV…TEATVRVFSD (184 aa)) is the FAD-binding PCMH-type domain.

It belongs to the oxygen-dependent FAD-linked oxidoreductase family. It depends on FAD as a cofactor.

It functions in the pathway alkaloid biosynthesis; ergot alkaloid biosynthesis. Functionally, FAD-linked oxidoreductase; part of the gene cluster that mediates the biosynthesis of fungal ergot alkaloid. DmaW catalyzes the first step of ergot alkaloid biosynthesis by condensing dimethylallyl diphosphate (DMAP) and tryptophan to form 4-dimethylallyl-L-tryptophan. The second step is catalyzed by the methyltransferase easF that methylates 4-dimethylallyl-L-tryptophan in the presence of S-adenosyl-L-methionine, resulting in the formation of 4-dimethylallyl-L-abrine. The catalase easC and the FAD-dependent oxidoreductase easE then transform 4-dimethylallyl-L-abrine to chanoclavine-I which is further oxidized by easD in the presence of NAD(+), resulting in the formation of chanoclavine-I aldehyde. Agroclavine dehydrogenase easG then mediates the conversion of chanoclavine-I aldehyde to agroclavine via a non-enzymatic adduct reaction: the substrate is an iminium intermediate that is formed spontaneously from chanoclavine-I aldehyde in the presence of glutathione. The presence of easA is not required to complete this reaction. Further conversion of agroclavine to paspalic acid is a two-step process involving oxidation of agroclavine to elymoclavine and of elymoclavine to paspalic acid, the second step being performed by the elymoclavine oxidase cloA. Paspalic acid is then further converted to D-lysergic acid. Ergopeptines are assembled from D-lysergic acid and three different amino acids by the D-lysergyl-peptide-synthetases composed each of a monomudular and a trimodular nonribosomal peptide synthetase subunit. LpsB and lpsC encode the monomodular subunits responsible for D-lysergic acid activation and incorporation into the ergopeptine backbone. LpsA1 and A2 subunits encode the trimodular nonribosomal peptide synthetase assembling the tripeptide portion of ergopeptines. LpsA1 is responsible for formation of the major ergopeptine, ergotamine, and lpsA2 for alpha-ergocryptine, the minor ergopeptine of the total alkaloid mixture elaborated by C.purpurea. D-lysergyl-tripeptides are assembled by the nonribosomal peptide synthetases and released as N-(D-lysergyl-aminoacyl)-lactams. Cyclolization of the D-lysergyl-tripeptides is performed by the Fe(2+)/2-ketoglutarate-dependent dioxygenase easH which introduces a hydroxyl group into N-(D-lysergyl-aminoacyl)-lactam at alpha-C of the aminoacyl residue followed by spontaneous condensation with the terminal lactam carbonyl group. The chain is FAD-linked oxidoreductase easE from Claviceps purpurea (Ergot fungus).